Reading from the N-terminus, the 344-residue chain is Ferrochelatase (344 aa).

Fe cation contacts are provided by histidine 211 and glutamate 292.

Belongs to the ferrochelatase family.

Its subcellular location is the cytoplasm. The catalysed reaction is heme b + 2 H(+) = protoporphyrin IX + Fe(2+). It functions in the pathway porphyrin-containing compound metabolism; protoheme biosynthesis; protoheme from protoporphyrin-IX: step 1/1. Its function is as follows. Catalyzes the ferrous insertion into protoporphyrin IX. This Methylobacillus flagellatus (strain ATCC 51484 / DSM 6875 / VKM B-1610 / KT) protein is Ferrochelatase.